We begin with the raw amino-acid sequence, 106 residues long: Cell division protein FtsL (106 aa).

Over 1-22 (MPRQSPPNLAKLIALDLLTVGR) the chain is Cytoplasmic. Residues 23–43 (VPLLLLVLIFSCAMGVVFMTH) traverse the membrane as a helical segment. Over 44-106 (HTRQAISAKD…SDKEVVINLK (63 aa)) the chain is Periplasmic.

The protein belongs to the FtsL family. In terms of assembly, part of a complex composed of FtsB, FtsL and FtsQ.

It is found in the cell inner membrane. Essential cell division protein. May link together the upstream cell division proteins, which are predominantly cytoplasmic, with the downstream cell division proteins, which are predominantly periplasmic. The polypeptide is Cell division protein FtsL (Vibrio cholerae serotype O1 (strain ATCC 39315 / El Tor Inaba N16961)).